Reading from the N-terminus, the 848-residue chain is Xylosyltransferase (848 aa).

At 1–14 the chain is on the cytoplasmic side; sequence MSLHRTLRRFLRKW. Residues 15-35 traverse the membrane as a helical; Signal-anchor for type II membrane protein segment; sequence KALVYAVSFILLIQAFFTFQS. The Lumenal portion of the chain corresponds to 36 to 843; the sequence is SPNLMEEEHL…PKTELISVKP (808 aa). Cystine bridges form between Cys145–Cys173, Cys189–Cys427, Cys446–Cys459, and Cys448–Cys457. UDP-alpha-D-xylose is bound by residues Val219, Asp247, and 276–278; that span reads TIW. The N-linked (GlcNAc...) asparagine glycan is linked to Asn306. 379–380 is a UDP-alpha-D-xylose binding site; that stretch reads DW. UDP-alpha-D-xylose contacts are provided by residues Ser460 and 482–483; that span reads RK. 2 cysteine pairs are disulfide-bonded: Cys529-Cys811 and Cys794-Cys822. A glycan (N-linked (GlcNAc...) asparagine) is linked at Asn530. The tract at residues 824-848 is disordered; that stretch reads NTNWSSLSPDPKTELISVKPDGRIR. N-linked (GlcNAc...) asparagine glycosylation is present at Asn826.

Belongs to the glycosyltransferase 14 family. XylT subfamily. It depends on a divalent metal cation as a cofactor.

The protein resides in the endoplasmic reticulum membrane. It localises to the golgi apparatus membrane. It catalyses the reaction UDP-alpha-D-xylose + L-seryl-[protein] = 3-O-(beta-D-xylosyl)-L-seryl-[protein] + UDP + H(+). It participates in glycan metabolism; chondroitin sulfate biosynthesis. Its pathway is glycan metabolism; heparan sulfate biosynthesis. Catalyzes the first step in biosynthesis of glycosaminoglycan. Transfers D-xylose from UDP-D-xylose to specific serine residues of the core protein. Initial enzyme in the biosynthesis of chondroitin sulfate and dermatan sulfate proteoglycans in fibroblasts and chondrocytes. This chain is Xylosyltransferase (xt), found in Ciona intestinalis (Transparent sea squirt).